Consider the following 214-residue polypeptide: Ribonuclease HII (214 aa).

An RNase H type-2 domain is found at E26 to R214. Positions 32, 33, and 124 each coordinate a divalent metal cation.

It belongs to the RNase HII family. It depends on Mn(2+) as a cofactor. The cofactor is Mg(2+).

It is found in the cytoplasm. It catalyses the reaction Endonucleolytic cleavage to 5'-phosphomonoester.. Functionally, endonuclease that specifically degrades the RNA of RNA-DNA hybrids. The polypeptide is Ribonuclease HII (Burkholderia pseudomallei (strain 1710b)).